Here is a 387-residue protein sequence, read N- to C-terminus: MNRHHLQDHFLEIDKKNCCVFRDDFIAKVLPPVLGLEFIFGLLGNGLALWIFCFHLKSWKSSRIFLFNLAVADFLLIICLPFVMDYYVRRSDWKFGDIPCRLVLFMFAMNRQGSIIFLTVVAVDRYFRVVHPHHALNKISNWTAAIISCLLWGITVGLTVHLLKKKLLIQNGTANVCISFSICHTFRWHEAMFLLEFFLPLGIILFCSARIIWSLRQRQMDRHAKIKRAITFIMVVAIVFVICFLPSVVVRIHIFWLLHTSGTQNCEVYRSVDLAFFITLSFTYMNSMLDPVVYYFSSPSFPNFFSTLINRCLQRKITGEPDNNRSTSVELTGDPNKTRGAPEALIANSGEPWSPSYLGPTSNNHSKKGHCHQEPASLEKQLGCCIE.

Residues 1 to 28 (MNRHHLQDHFLEIDKKNCCVFRDDFIAK) are Extracellular-facing. The helical transmembrane segment at 29 to 50 (VLPPVLGLEFIFGLLGNGLALW) threads the bilayer. Residues 51–63 (IFCFHLKSWKSSR) are Cytoplasmic-facing. Residues 64–85 (IFLFNLAVADFLLIICLPFVMD) form a helical membrane-spanning segment. The Extracellular segment spans residues 86 to 102 (YYVRRSDWKFGDIPCRL). Cysteines 100 and 177 form a disulfide. Residues 103-123 (VLFMFAMNRQGSIIFLTVVAV) traverse the membrane as a helical segment. The Cytoplasmic segment spans residues 124–142 (DRYFRVVHPHHALNKISNW). The chain crosses the membrane as a helical span at residues 143 to 163 (TAAIISCLLWGITVGLTVHLL). Residues 164–194 (KKKLLIQNGTANVCISFSICHTFRWHEAMFL) lie on the Extracellular side of the membrane. Residues 195–209 (LEFFLPLGIILFCSA) form a helical membrane-spanning segment. The Cytoplasmic segment spans residues 210 to 236 (RIIWSLRQRQMDRHAKIKRAITFIMVV). A helical membrane pass occupies residues 237 to 256 (AIVFVICFLPSVVVRIHIFW). Residues 257–273 (LLHTSGTQNCEVYRSVD) are Extracellular-facing. The helical transmembrane segment at 274–298 (LAFFITLSFTYMNSMLDPVVYYFSS) threads the bilayer. Residues 299–387 (PSFPNFFSTL…LEKQLGCCIE (89 aa)) are Cytoplasmic-facing. Residues 319–343 (GEPDNNRSTSVELTGDPNKTRGAPE) are disordered.

The protein belongs to the G-protein coupled receptor 1 family. Expression largely restricted to adipose tissue and spleen.

It is found in the cell membrane. In terms of biological role, receptor for 3-OH-octanoid acid mediates a negative feedback regulation of adipocyte lipolysis to counteract prolipolytic influences under conditions of physiological or pathological increases in beta-oxidation rates. Acts as a low affinity receptor for nicotinic acid. This pharmacological effect requires nicotinic acid doses that are much higher than those provided by a normal diet. The protein is Hydroxycarboxylic acid receptor 3 (HCAR3) of Homo sapiens (Human).